The sequence spans 402 residues: Xylose/arabinose-binding protein XylF (402 aa).

The helical transmembrane segment at 38 to 58 threads the bilayer; sequence GIIAGVLAAFGAGFGSGYVTA.

This sequence belongs to the bacterial solute-binding protein 2 family. The complex is composed of two ATP-binding proteins (XylG), two transmembrane proteins (XylH) and a solute-binding protein (XylF).

The protein resides in the cell membrane. Its function is as follows. Part of the ABC transporter complex XylFGH involved in the uptake of xylose and arabinose. This Sulfolobus acidocaldarius (strain ATCC 33909 / DSM 639 / JCM 8929 / NBRC 15157 / NCIMB 11770) protein is Xylose/arabinose-binding protein XylF.